The following is a 133-amino-acid chain: Small ribosomal subunit protein bS6 (133 aa).

Belongs to the bacterial ribosomal protein bS6 family.

Functionally, binds together with bS18 to 16S ribosomal RNA. The sequence is that of Small ribosomal subunit protein bS6 from Chlorobium limicola (strain DSM 245 / NBRC 103803 / 6330).